Consider the following 365-residue polypeptide: MFEVNPVLNKLKELSERTELLRGYLDYDAKKERLEEVNAELEQPDVWNEPERAQALGKERVALENVVGTIDTLTQGADDVAMLVELAVEGEDEDTFNEAVAEADVLETKLVDLEFRRMFSGQHDPSDCYIDIQSGSGGTEAQDWANMVLRMYLRWGDAHGYKPELIECSEGDVAGIKSATIKFTGEYAFGWLRTETGVHRLVRKSPFDSGGRRHTSFCSVFVYPEIDDDIDIEINPADLRIDVYRASGAGGQHVNRTESAVRITHIPTGVVVQCQNDRSQHKNKDQCMKQLKAKLYELEIQKQNAEKQALEETKSDIGWGSQIRSYVLDDARIKDLRTGVETRNTQAVLDGDLDKFIEASLKSGL.

Position 252 is an N5-methylglutamine (Gln-252).

The protein belongs to the prokaryotic/mitochondrial release factor family. In terms of processing, methylated by PrmC. Methylation increases the termination efficiency of RF2.

The protein resides in the cytoplasm. In terms of biological role, peptide chain release factor 2 directs the termination of translation in response to the peptide chain termination codons UGA and UAA. In Aeromonas hydrophila subsp. hydrophila (strain ATCC 7966 / DSM 30187 / BCRC 13018 / CCUG 14551 / JCM 1027 / KCTC 2358 / NCIMB 9240 / NCTC 8049), this protein is Peptide chain release factor 2.